Here is a 563-residue protein sequence, read N- to C-terminus: MANLNDSAVTNGTLHNPKTQQGKRQSTGCVKNGISKEAQQNRKAYAEDKPVFEPYQEAPLYVYVLTYMGYGIGILFGYLRDFMRNWGIEKCNAAVEREEQKDFVPLYQDFENFYKRNLYMRIRDSWSHTVCSAPEPYMNVMEKVTDDYNWTFRHTGKVIENIINMASYNYLGLAGKYDDSMVRVKDTLEKYGVGVASTRNEMGTLDIHKELEDLMAEFLNVEAVMSFGMGFATNAMNIPVFVGKGCLILSDEFNHTSVILGSRLSGAVIRPFKHNNAENLEKLLREAIIRGQPGTGRAWKKILIVVEGVYSMEGSIVNLAQIVALKKKYKAYLYIDEAHSIGCTGPTGRGVRELFGLDPEDIDVYMGTFTKSFSGSGGYIGGKKEIVDYLRMQSHSTTYATSMSPVVAAQLIRSLKITMGYEGNIGGMERIQQLKENIKYFRRRLKEMGFIIYGNDFSPVIPVLLYMPAKVSAFSRFLLKKKISVVVVGFPATSLPEGRARFSMSSAHTREMLDTVLEVVDELGDLLNVKYFPLKKSGRAILYNKEGFDNEASFEEMHSEPEA.

Residues 1 to 29 (MANLNDSAVTNGTLHNPKTQQGKRQSTGC) are compositionally biased toward polar residues. The interval 1–32 (MANLNDSAVTNGTLHNPKTQQGKRQSTGCVKN) is disordered. A helical transmembrane segment spans residues 59-79 (PLYVYVLTYMGYGIGILFGYL). K371 carries the N6-(pyridoxal phosphate)lysine modification.

The protein belongs to the class-II pyridoxal-phosphate-dependent aminotransferase family. In terms of assembly, component of the serine palmitoyltransferase (SPT) complex, which is composed of SPTLC1, SPTLC2 or SPTLC3 and SPTSSA or SPTSSB. The heterodimer consisting of SPTLC1 and SPTLC2/SPTLC3 forms the catalytic core of the enzyme, while SPTSSA or SPTSSB subunits determine substrate specificity. SPT also interacts with ORMDL proteins, especially ORMDL3, which negatively regulate SPT activity in the presence of ceramides. The cofactor is pyridoxal 5'-phosphate. In terms of tissue distribution, expressed in white and brown adipose tissues.

The protein resides in the endoplasmic reticulum membrane. The enzyme catalyses L-serine + hexadecanoyl-CoA + H(+) = 3-oxosphinganine + CO2 + CoA. The catalysed reaction is dodecanoyl-CoA + L-serine + H(+) = 3-oxotetradecasphinganine + CO2 + CoA. It carries out the reaction tetradecanoyl-CoA + L-serine + H(+) = 3-oxohexadecasphinganine + CO2 + CoA. It catalyses the reaction octadecanoyl-CoA + L-serine + H(+) = 3-oxoeicosasphinganine + CO2 + CoA. It participates in lipid metabolism; sphingolipid metabolism. SPT complex catalytic activity is negatively regulated by ORMDL proteins, including ORMDL3, in the presence of ceramides. This mechanism allows to maintain ceramide levels at sufficient concentrations for the production of complex sphingolipids, but which prevents the accumulation of ceramides to levels that trigger apoptosis. In terms of biological role, component of the serine palmitoyltransferase multisubunit enzyme (SPT) that catalyzes the initial and rate-limiting step in sphingolipid biosynthesis by condensing L-serine and activated acyl-CoA (most commonly palmitoyl-CoA) to form long-chain bases. The SPT complex is composed of SPTLC1, SPTLC2 or SPTLC3 and SPTSSA or SPTSSB. Within this complex, the heterodimer consisting of SPTLC1 and SPTLC2/SPTLC3 forms the catalytic core. The composition of the serine palmitoyltransferase (SPT) complex determines the substrate preference. The SPTLC1-SPTLC2-SPTSSA complex shows a strong preference for C16-CoA substrate, while the SPTLC1-SPTLC3-SPTSSA isozyme uses both C14-CoA and C16-CoA as substrates, with a slight preference for C14-CoA. The SPTLC1-SPTLC2-SPTSSB complex shows a strong preference for C18-CoA substrate, while the SPTLC1-SPTLC3-SPTSSB isozyme displays an ability to use a broader range of acyl-CoAs, without apparent preference. The sequence is that of Serine palmitoyltransferase 3 from Mus musculus (Mouse).